A 246-amino-acid polypeptide reads, in one-letter code: Proteasome subunit alpha type-6 (246 aa).

Belongs to the peptidase T1A family. The 26S proteasome consists of a 20S proteasome core and two 19S regulatory subunits. The 20S proteasome core is composed of 28 subunits that are arranged in four stacked rings, resulting in a barrel-shaped structure. The two end rings are each formed by seven alpha subunits, and the two central rings are each formed by seven beta subunits. The catalytic chamber with the active sites is on the inside of the barrel.

It localises to the cytoplasm. Its subcellular location is the nucleus. Its function is as follows. The proteasome is a multicatalytic proteinase complex which is characterized by its ability to cleave peptides with Arg, Phe, Tyr, Leu, and Glu adjacent to the leaving group at neutral or slightly basic pH. The proteasome has an ATP-dependent proteolytic activity. The chain is Proteasome subunit alpha type-6 (pas-1) from Caenorhabditis elegans.